We begin with the raw amino-acid sequence, 422 residues long: Glutamyl-tRNA reductase (422 aa).

Residues 48–51 (TCNR), S100, 105–107 (EDQ), and Q111 contribute to the substrate site. The active-site Nucleophile is the C49. An NADP(+)-binding site is contributed by 180–185 (GTGEMG).

It belongs to the glutamyl-tRNA reductase family. In terms of assembly, homodimer.

It catalyses the reaction (S)-4-amino-5-oxopentanoate + tRNA(Glu) + NADP(+) = L-glutamyl-tRNA(Glu) + NADPH + H(+). It participates in porphyrin-containing compound metabolism; protoporphyrin-IX biosynthesis; 5-aminolevulinate from L-glutamyl-tRNA(Glu): step 1/2. Its function is as follows. Catalyzes the NADPH-dependent reduction of glutamyl-tRNA(Glu) to glutamate 1-semialdehyde (GSA). This Methanococcoides burtonii (strain DSM 6242 / NBRC 107633 / OCM 468 / ACE-M) protein is Glutamyl-tRNA reductase.